Here is a 100-residue protein sequence, read N- to C-terminus: Cobalt transport protein CbiN (100 aa).

Transmembrane regions (helical) follow at residues 8–28 (LSNW…LIFV) and 69–89 (LLFS…VGLY).

Belongs to the CbiN family. Forms an energy-coupling factor (ECF) transporter complex composed of an ATP-binding protein (A component, CbiO), a transmembrane protein (T component, CbiQ) and 2 possible substrate-capture proteins (S components, CbiM and CbiN) of unknown stoichimetry.

It localises to the cell inner membrane. It participates in cofactor biosynthesis; adenosylcobalamin biosynthesis. Part of the energy-coupling factor (ECF) transporter complex CbiMNOQ involved in cobalt import. The polypeptide is Cobalt transport protein CbiN (Nostoc sp. (strain PCC 7120 / SAG 25.82 / UTEX 2576)).